Consider the following 93-residue polypeptide: Cobalt transport protein CbiN (93 aa).

2 consecutive transmembrane segments (helical) span residues 5 to 25 and 63 to 83; these read LMLL…NHGG and LLFT…LGYC.

It belongs to the CbiN family. In terms of assembly, forms an energy-coupling factor (ECF) transporter complex composed of an ATP-binding protein (A component, CbiO), a transmembrane protein (T component, CbiQ) and 2 possible substrate-capture proteins (S components, CbiM and CbiN) of unknown stoichimetry.

It is found in the cell inner membrane. Its pathway is cofactor biosynthesis; adenosylcobalamin biosynthesis. Part of the energy-coupling factor (ECF) transporter complex CbiMNOQ involved in cobalt import. The protein is Cobalt transport protein CbiN of Salmonella newport (strain SL254).